The following is a 188-amino-acid chain: UPF0397 protein LCK_00164 (188 aa).

5 helical membrane passes run 15–35 (VVAT…IAIP), 48–68 (GWLA…VGLI), 79–99 (GAPW…LGFG), 121–141 (WQAV…DIII), and 154–174 (AVTT…LLVA).

It belongs to the UPF0397 family.

It is found in the cell membrane. The sequence is that of UPF0397 protein LCK_00164 from Leuconostoc citreum (strain KM20).